The following is a 667-amino-acid chain: YTH domain-containing protein ECT2 (667 aa).

Disordered regions lie at residues 264–305 and 379–398; these read QRPV…PSSV and NELNRGPRAKGTKNQKGNLD. Residues 267–285 show a composition bias toward low complexity; it reads VSGSGVASSYSKSSTVPSS. The segment covering 286-305 has biased composition (polar residues); it reads RNQNYRSNSHYTSVHQPSSV. The YTH domain maps to 442-579; it reads AMFFIIKSYS…EQGLKIVKIF (138 aa). Residues 448–450, Asp454, 464–465, Asn497, Trp521, Trp526, and Trp534 each bind RNA; these read KSY and WA. The disordered stretch occupies residues 606 to 667; it reads KAKQTQKQVS…VTGDVVANGC (62 aa). Basic and acidic residues predominate over residues 614-627; the sequence is VSEEKVTDEKKESA. Positions 628-639 are enriched in low complexity; sequence TAESASKESPAA.

In terms of assembly, interacts (via C-terminus) with CIPK1. Expressed in the shoot apex, at the sites of leaf formation, and in emerging leaves. Highly expressed in rapidly developing tissues.

The protein localises to the cytoplasm. Its subcellular location is the nucleus. Functionally, specifically recognizes and binds N6-methyladenosine (m6A)-containing RNAs, and regulates mRNA stability. M6A is a modification present at internal sites of mRNAs and some non-coding RNAs and plays a role in mRNA stability and processing. Binds preferentially in the 3'UTRs of target genes. May play dual roles in regulating 3'UTR processing in the nucleus and facilitating mRNA stability in the cytoplasm. Required for the correct timing of leaf formation and normal leaf morphology. Functions redundantly with ECT3. Required for proper trichome branching and morphology. Controls trichome morphology by binding transcripts related to trichome morphogenesis and affecting their stability. This Arabidopsis thaliana (Mouse-ear cress) protein is YTH domain-containing protein ECT2.